The sequence spans 491 residues: Lysine--tRNA ligase 1 (491 aa).

2 residues coordinate Mg(2+): E400 and E407.

The protein belongs to the class-II aminoacyl-tRNA synthetase family. As to quaternary structure, homodimer. The cofactor is Mg(2+).

It localises to the cytoplasm. It catalyses the reaction tRNA(Lys) + L-lysine + ATP = L-lysyl-tRNA(Lys) + AMP + diphosphate. The protein is Lysine--tRNA ligase 1 of Mycoplasmopsis pulmonis (strain UAB CTIP) (Mycoplasma pulmonis).